We begin with the raw amino-acid sequence, 285 residues long: Acetylglutamate kinase (285 aa).

Substrate-binding positions include G69 to G70, R91, and N183.

Belongs to the acetylglutamate kinase family. ArgB subfamily.

The protein resides in the cytoplasm. It carries out the reaction N-acetyl-L-glutamate + ATP = N-acetyl-L-glutamyl 5-phosphate + ADP. It functions in the pathway amino-acid biosynthesis; L-arginine biosynthesis; N(2)-acetyl-L-ornithine from L-glutamate: step 2/4. Its function is as follows. Catalyzes the ATP-dependent phosphorylation of N-acetyl-L-glutamate. This is Acetylglutamate kinase from Jannaschia sp. (strain CCS1).